We begin with the raw amino-acid sequence, 147 residues long: MASSLKIWGTLLALLCILCTLLVQSKEVSWREFMKQHYLSPSREFREYKCDVLMRENEALKDKSSHMFIYISWYKIEHICTSDNWMDRFRNAYVWVQNPLKVLKCHQENSKNSYTESRSFNYIEFHCSMDGYVDSIEDLKMVEPIGN.

The signal sequence occupies residues 1 to 25 (MASSLKIWGTLLALLCILCTLLVQS).

In terms of tissue distribution, epididymis.

Its subcellular location is the secreted. Its function is as follows. Possible function in sperm maturation. This chain is Epididymal secretory protein E3-beta (EDDM3B), found in Homo sapiens (Human).